The following is a 90-amino-acid chain: Darcynin 1 (90 aa).

Belongs to the darcynin family.

This Acinetobacter baumannii (strain ATCC 17978 / DSM 105126 / CIP 53.77 / LMG 1025 / NCDC KC755 / 5377) protein is Darcynin 1.